The following is a 1306-amino-acid chain: Kinesin-like protein KIN-14L (1306 aa).

The Kinesin motor domain occupies 142–456 (NVKVFCRSRP…LSFSARAKNA (315 aa)). Residue 223 to 230 (GQSRSGKT) participates in ATP binding. 2 coiled-coil regions span residues 466–507 (IKKW…ANDQ) and 540–595 (HRIE…ALNS). Polar residues-rich tracts occupy residues 592 to 611 (ALNSSDARSTIGSESASVIS) and 660 to 677 (LGSSPQAPSPSNKQTNAQ). Disordered regions lie at residues 592–627 (ALNSSDARSTIGSESASVISTPKMMESTADSSSVTK), 657–710 (KSGL…SGAI), and 849–881 (KSHTSRSRSSSRGSSPGRSPVHHHHDHGSRTSL). Residues 855-867 (SRSSSRGSSPGRS) are compositionally biased toward low complexity.

It belongs to the TRAFAC class myosin-kinesin ATPase superfamily. Kinesin family. KIN-14 subfamily.

The protein is Kinesin-like protein KIN-14L of Oryza sativa subsp. japonica (Rice).